Consider the following 238-residue polypeptide: HTH-type transcriptional regulator TreR (238 aa).

The region spanning 1–71 (MKVNKFITIY…RGKGSVVLNR (71 aa)) is the HTH gntR-type domain. Residues 31-50 (EHELTAQYGTSRETVRKALH) constitute a DNA-binding region (H-T-H motif).

Dimer of dimers.

Functionally, repressor for the trePA operon. It is able to bind trehalose-6-phosphate. The sequence is that of HTH-type transcriptional regulator TreR (treR) from Bacillus subtilis (strain 168).